Reading from the N-terminus, the 64-residue chain is Large ribosomal subunit protein bL35 (64 aa).

Belongs to the bacterial ribosomal protein bL35 family.

The chain is Large ribosomal subunit protein bL35 from Shewanella loihica (strain ATCC BAA-1088 / PV-4).